A 428-amino-acid polypeptide reads, in one-letter code: Trigger factor (428 aa).

In terms of domain architecture, PPIase FKBP-type spans 163–248 (GDTAVIDFEG…INEVKAKELP (86 aa)).

This sequence belongs to the FKBP-type PPIase family. Tig subfamily.

The protein resides in the cytoplasm. The enzyme catalyses [protein]-peptidylproline (omega=180) = [protein]-peptidylproline (omega=0). Functionally, involved in protein export. Acts as a chaperone by maintaining the newly synthesized protein in an open conformation. Functions as a peptidyl-prolyl cis-trans isomerase. This chain is Trigger factor, found in Oceanobacillus iheyensis (strain DSM 14371 / CIP 107618 / JCM 11309 / KCTC 3954 / HTE831).